Reading from the N-terminus, the 433-residue chain is Enolase (433 aa).

Gln-164 contacts (2R)-2-phosphoglycerate. The Proton donor role is filled by Glu-206. Mg(2+) is bound by residues Asp-243, Glu-289, and Asp-316. 4 residues coordinate (2R)-2-phosphoglycerate: Lys-341, Arg-370, Ser-371, and Lys-392. The active-site Proton acceptor is the Lys-341.

Belongs to the enolase family. The cofactor is Mg(2+).

It is found in the cytoplasm. The protein localises to the secreted. It localises to the cell surface. The enzyme catalyses (2R)-2-phosphoglycerate = phosphoenolpyruvate + H2O. Its pathway is carbohydrate degradation; glycolysis; pyruvate from D-glyceraldehyde 3-phosphate: step 4/5. In terms of biological role, catalyzes the reversible conversion of 2-phosphoglycerate (2-PG) into phosphoenolpyruvate (PEP). It is essential for the degradation of carbohydrates via glycolysis. The polypeptide is Enolase (Borreliella burgdorferi (strain ZS7) (Borrelia burgdorferi)).